The sequence spans 290 residues: MSGNLDILALKDDDVNKMLAATTHVGSTSVNFQMESYVFKRRPDGVHIINLGRTWEKLLLAARCIASIEYPGEVFAISSRQFGQRAVLKFAHYTEATPIAGRFTPGAFTNQIQPAFREPRLLIVTDPLTDHQPVTEASYVNIPVIAFCNTDSPLKFVDIAIPCNTKSPHSIGLMWWLLAREVLKLRGKISDKWELKPDLFFYRDPEEQEKEQAALLEAAPAAKEMYTDEPIPAVEEGGNWGEEAAPAAPAAAAAVPAVAGAAIPQMIQADDWNEDETQTAGSWGGATGGF.

It belongs to the universal ribosomal protein uS2 family. Component of the small ribosomal subunit. Mature ribosomes consist of a small (40S) and a large (60S) subunit. The 40S subunit contains about 33 different proteins and 1 molecule of RNA (18S). The 60S subunit contains about 49 different proteins and 3 molecules of RNA (28S, 5.8S and 5S). Interacts with ribosomal protein S21.

The protein resides in the cytoplasm. Its function is as follows. Required for the assembly and/or stability of the 40S ribosomal subunit. Required for the processing of the 20S rRNA-precursor to mature 18S rRNA in a late step of the maturation of 40S ribosomal subunits. The sequence is that of Small ribosomal subunit protein uS2 from Culex quinquefasciatus (Southern house mosquito).